The following is a 311-amino-acid chain: Methionyl-tRNA formyltransferase (311 aa).

110–113 (SLLP) is a (6S)-5,6,7,8-tetrahydrofolate binding site.

The protein belongs to the Fmt family.

The catalysed reaction is L-methionyl-tRNA(fMet) + (6R)-10-formyltetrahydrofolate = N-formyl-L-methionyl-tRNA(fMet) + (6S)-5,6,7,8-tetrahydrofolate + H(+). Functionally, attaches a formyl group to the free amino group of methionyl-tRNA(fMet). The formyl group appears to play a dual role in the initiator identity of N-formylmethionyl-tRNA by promoting its recognition by IF2 and preventing the misappropriation of this tRNA by the elongation apparatus. The protein is Methionyl-tRNA formyltransferase of Streptococcus equi subsp. zooepidemicus (strain H70).